A 354-amino-acid chain; its full sequence is Serum paraoxonase/arylesterase 2 (354 aa).

A disulfide bridge connects residues cysteine 42 and cysteine 352. The Ca(2+) site is built by glutamate 53 and aspartate 54. Residue histidine 114 is the Proton acceptor of the active site. Residues isoleucine 116, asparagine 167, aspartate 168, and asparagine 223 each coordinate Ca(2+). An N-linked (GlcNAc...) asparagine glycan is attached at asparagine 254. Residues aspartate 268 and asparagine 269 each coordinate Ca(2+). Asparagine 269 and asparagine 323 each carry an N-linked (GlcNAc...) asparagine glycan.

It belongs to the paraoxonase family. In terms of assembly, homotrimer. Requires Ca(2+) as cofactor. Glycosylated. In terms of processing, the signal sequence is not cleaved.

Its subcellular location is the membrane. It carries out the reaction a phenyl acetate + H2O = a phenol + acetate + H(+). It catalyses the reaction an N-acyl-L-homoserine lactone + H2O = an N-acyl-L-homoserine + H(+). Functionally, capable of hydrolyzing lactones and a number of aromatic carboxylic acid esters. This chain is Serum paraoxonase/arylesterase 2 (PON2), found in Bos taurus (Bovine).